The sequence spans 135 residues: Large-conductance mechanosensitive channel (135 aa).

2 helical membrane-spanning segments follow: residues 9 to 29 and 79 to 99; these read AFAARGNVIDMAVGIIIGAAF and IQTIIDFLIISFAIFMGLKAI.

The protein belongs to the MscL family. Homopentamer.

The protein localises to the cell inner membrane. Channel that opens in response to stretch forces in the membrane lipid bilayer. May participate in the regulation of osmotic pressure changes within the cell. The protein is Large-conductance mechanosensitive channel of Aeromonas salmonicida (strain A449).